Consider the following 279-residue polypeptide: Ribosomal RNA small subunit methyltransferase J (279 aa).

S-adenosyl-L-methionine-binding positions include 138-139 (ER) and aspartate 194.

This sequence belongs to the methyltransferase superfamily. RsmJ family.

It localises to the cytoplasm. It catalyses the reaction guanosine(1516) in 16S rRNA + S-adenosyl-L-methionine = N(2)-methylguanosine(1516) in 16S rRNA + S-adenosyl-L-homocysteine + H(+). In terms of biological role, specifically methylates the guanosine in position 1516 of 16S rRNA. This is Ribosomal RNA small subunit methyltransferase J from Acinetobacter baumannii (strain AYE).